Reading from the N-terminus, the 166-residue chain is Phosphopantetheine adenylyltransferase (166 aa).

Residue threonine 11 participates in substrate binding. ATP-binding positions include 11-12 (TF) and histidine 19. Substrate contacts are provided by lysine 43, threonine 79, and arginine 93. ATP is bound by residues glutamate 104 and 128 to 134 (LEPLNST).

The protein belongs to the bacterial CoaD family. In terms of assembly, homohexamer. It depends on Mg(2+) as a cofactor.

Its subcellular location is the cytoplasm. It catalyses the reaction (R)-4'-phosphopantetheine + ATP + H(+) = 3'-dephospho-CoA + diphosphate. The protein operates within cofactor biosynthesis; coenzyme A biosynthesis; CoA from (R)-pantothenate: step 4/5. Reversibly transfers an adenylyl group from ATP to 4'-phosphopantetheine, yielding dephospho-CoA (dPCoA) and pyrophosphate. This chain is Phosphopantetheine adenylyltransferase, found in Lactococcus lactis subsp. cremoris (strain MG1363).